Consider the following 653-residue polypeptide: MGNGMCSRKQKRIFQTLLLLTVVFGFLYGAMLYLELQTQLRKAEAVALKYQQHQDSLSAQLQVVYEHRSRLEKSLQKERLEHKKAKEDFLVYKLEAQETLNKGRQDSNSRYSALNVQHQMLKSQHEELRKQHSDLEEEHRKQGEDFSRAFNDHKQRYLQLQQEKEQELSKLKETVYNLREENRQLRKAHQDIHTQLQDVKTQVAEYKQLKDTLNRIPSFRNPDPAEQQNVTFTHGTHPPQGYNVREKLTGELQEGQQNHDAMPRRMEEKPLSSMQKEAGFQALEEQNQVEPREPEGRQVEEEHRKALEEEEMEQVGQAEHLEEEHDPSPEEQDREWRDQRRQNAAHLLDGRPQAEIEHSTKAATNFRSPYEEQLEQQRLAARRDEEAQRLREHQEALHQQRLHGQLLRQQQQQQYLAREMAQQKQADHEEGQQQYQLRQQAHSDAVENDVAQGAEDQGIPEEEGGAYDRDNQRQDEAEGDPGNRQEFHEPGHQEGDPEAEADRAAAQDINPADDPNNQGEDEFEEAEQVREENLPEESEERKQSEAKQGNVEMDEHLVMAGNPDQQEDNVDEQYQEEGEEEVQEDLTEEKKRELEHNAEETYGENPDDKNNDVEEQGVPNRAHPKGRQEHYEEEEDEEDGAAVAEKSHRRAEM.

Gly-2 is lipidated: N-myristoyl glycine. Over 2 to 12 (GNGMCSRKQKR) the chain is Cytoplasmic. A helical; Signal-anchor for type II membrane protein transmembrane segment spans residues 13-33 (IFQTLLLLTVVFGFLYGAMLY). Over 34 to 653 (LELQTQLRKA…AEKSHRRAEM (620 aa)) the chain is Lumenal. The interval 38-107 (TQLRKAEAVA…ETLNKGRQDS (70 aa)) is golgi targeting. A coiled-coil region spans residues 66 to 216 (EHRSRLEKSL…KQLKDTLNRI (151 aa)). An endosome targeting region spans residues 80-175 (LEHKKAKEDF…QELSKLKETV (96 aa)). Positions 122 to 143 (KSQHEELRKQHSDLEEEHRKQG) are disordered. Residues 123–143 (SQHEELRKQHSDLEEEHRKQG) show a composition bias toward basic and acidic residues. The segment at 176–220 (YNLREENRQLRKAHQDIHTQLQDVKTQVAEYKQLKDTLNRIPSFR) is golgi targeting. The N-linked (GlcNAc...) asparagine glycan is linked to Asn-229. The interval 253–653 (QEGQQNHDAM…AEKSHRRAEM (401 aa)) is disordered. 5 stretches are compositionally biased toward basic and acidic residues: residues 261–270 (AMPRRMEEKP), 290–307 (EPREPEGRQVEEEHRKAL), 319–328 (EHLEEEHDPS), 348–360 (LDGRPQAEIEHST), and 381–398 (ARRDEEAQRLREHQEALH). Ser-328 carries the post-translational modification Phosphoserine. The segment covering 399–423 (QQRLHGQLLRQQQQQQYLAREMAQQ) has biased composition (low complexity). Composition is skewed to basic and acidic residues over residues 466–505 (AYDRDNQRQDEAEGDPGNRQEFHEPGHQEGDPEAEADRAA) and 527–545 (EQVREENLPEESEERKQSE). Residue Ser-538 is modified to Phosphoserine. Over residues 565-587 (QQEDNVDEQYQEEGEEEVQEDLT) the composition is skewed to acidic residues. Position 574 is a phosphotyrosine (Tyr-574). Thr-587 is subject to Phosphothreonine. A compositionally biased stretch (basic and acidic residues) spans 588 to 599 (EEKKRELEHNAE). Tyr-631 is subject to Phosphotyrosine. A compositionally biased stretch (acidic residues) spans 631–640 (YEEEEDEEDG).

Belongs to the GOLIM4 family. Post-translationally, phosphorylated by c-AMP-dependent kinases most probably in its lumenal part. O-glycosylated; modified by sialic acid residues. In terms of processing, N-glycosylated; N-glycans are of the complex type and modified by sialic acid residues. In terms of tissue distribution, expressed in liver, pancreas and pituitary (at protein level).

It is found in the golgi apparatus. Its subcellular location is the golgi stack membrane. The protein localises to the endosome membrane. The protein resides in the membrane. Plays a role in endosome to Golgi protein trafficking; mediates protein transport along the late endosome-bypass pathway from the early endosome to the Golgi. The chain is Golgi integral membrane protein 4 (Golim4) from Rattus norvegicus (Rat).